A 423-amino-acid chain; its full sequence is MRFRWKFFGSLLCVTGLLLVLYRQLGNVPQPPPGPASAQGSPSLTATSGYFRALEDHVPRRDARQGGKKKTNWNNVRAPEQKPNPPMPEEWMHLAVVACGDRLEETVTMLKSAVLFSFKKIKFHIFAEDSLKSDFQMKLEIWPQQISRKIEYKIYPITFPGGNTQEWKKLFKPCAAQRLFLPMLLQDVDSLLYVDTDVLFLRPLDHVWAFLRRFNDTQLAAMAPEHEISKIGWYSRFARHPFYGTTGVNSGVMLMNLTRIRNQHFKNNMIPAGLTWEEMLHPLYQKYKNYITWGDQDLLNIIFYFNPEMLYVFPCHWNYRPDHCMYGSNCKAAEEEGVSILHGNRGVYHDEKQPAFKAFYEVIRDYTFDDNLFQSMYFPLQSKFLESVHTLCGRIPQVFLKQIEKTMKMMYERRVVVHIRSDV.

Topologically, residues 1–6 are cytoplasmic; that stretch reads MRFRWK. The helical; Signal-anchor for type II membrane protein transmembrane segment at 7–26 threads the bilayer; the sequence is FFGSLLCVTGLLLVLYRQLG. Residues 27 to 423 are Lumenal-facing; that stretch reads NVPQPPPGPA…RVVVHIRSDV (397 aa). The segment at 60–85 is disordered; that stretch reads RRDARQGGKKKTNWNNVRAPEQKPNP. Residues Asn215 and Asn256 are each glycosylated (N-linked (GlcNAc...) asparagine).

It belongs to the glycosyltransferase 8 family.

It is found in the membrane. The enzyme catalyses 3-O-(beta-D-glucosyl)-L-seryl-[EGF-like domain protein] + UDP-alpha-D-xylose = 3-O-[alpha-D-xylosyl-(1-&gt;3)-beta-D-glucosyl]-L-seryl-[EGF-like domain protein] + UDP + H(+). Functionally, glycosyltransferase which elongates the O-linked glucose attached to EGF-like repeats in the extracellular domain of Notch proteins by catalyzing the addition of xylose. The protein is Glucoside xylosyltransferase 2 (gxylt2) of Xenopus laevis (African clawed frog).